The sequence spans 245 residues: tRNA pseudouridine synthase A (245 aa).

The active-site Nucleophile is Asp-52. Residue Tyr-111 participates in substrate binding.

It belongs to the tRNA pseudouridine synthase TruA family. Homodimer.

The catalysed reaction is uridine(38/39/40) in tRNA = pseudouridine(38/39/40) in tRNA. In terms of biological role, formation of pseudouridine at positions 38, 39 and 40 in the anticodon stem and loop of transfer RNAs. This Ehrlichia chaffeensis (strain ATCC CRL-10679 / Arkansas) protein is tRNA pseudouridine synthase A.